The primary structure comprises 268 residues: Zinc transporter ZupT (268 aa).

The next 8 membrane-spanning stretches (helical) occupy residues 5 to 25 (ILFA…GSII), 38 to 58 (TVSL…EIFV), 72 to 92 (AGYI…ALID), 124 to 144 (MGLF…LATF), 152 to 172 (TLGI…GLAV), 187 to 207 (FVLS…GFFL), 211 to 231 (LFTE…MVYI), and 248 to 268 (LAIG…LLFL). Fe(2+) contacts are provided by Asn136 and Glu139. 2 residues coordinate Zn(2+): Glu139 and His164. Fe(2+) is bound by residues Asn165, Glu168, and Glu197. Glu168 contacts Zn(2+).

It belongs to the ZIP transporter (TC 2.A.5) family. ZupT subfamily.

The protein localises to the cell inner membrane. It catalyses the reaction Zn(2+)(in) = Zn(2+)(out). Its function is as follows. Mediates zinc uptake. May also transport other divalent cations. This Chlorobaculum parvum (strain DSM 263 / NCIMB 8327) (Chlorobium vibrioforme subsp. thiosulfatophilum) protein is Zinc transporter ZupT.